The chain runs to 166 residues: uncharacterized protein (166 aa).

This is an uncharacterized protein from Enterobacteria phage T4 (Bacteriophage T4).